Consider the following 761-residue polypeptide: Copper-exporting P-type ATPase (761 aa).

T2 is subject to N-acetylthreonine. An HMA domain is found at 14-78 (QRIQLRISGM…AVRRAGYQAD (65 aa)). Cu(+) contacts are provided by C25 and C28. The next 6 helical transmembrane spans lie at 102 to 122 (LAIA…FGVV), 129 to 149 (GWQW…AWPF), 164 to 184 (METL…YTVF), 199 to 219 (LLGS…FVLV), 361 to 381 (VFVP…LIAG), and 387 to 407 (AVSA…GLAT). The 4-aspartylphosphate intermediate role is filled by D443. A run of 2 helical transmembrane segments spans residues 695-714 (MVWA…AGLL) and 718-735 (VAGA…SNSL).

This sequence belongs to the cation transport ATPase (P-type) (TC 3.A.3) family. Type IB subfamily.

The protein localises to the cell membrane. It carries out the reaction Cu(+)(in) + ATP + H2O = Cu(+)(out) + ADP + phosphate + H(+). Its activity is regulated as follows. ATPase activity is stimulated by Cu(+) ions. In terms of biological role, involved in copper export. Could be involved in the copper detoxification of mycobacterial cells. The chain is Copper-exporting P-type ATPase (ctpA) from Mycobacterium tuberculosis (strain ATCC 25618 / H37Rv).